A 219-amino-acid polypeptide reads, in one-letter code: MAEVNANMVKELREKTGAGMMDCKKALAEAGGDFAKAEEVLRKKGLAAAAKKSSRAATEGQVASYIHMGGKIGVLVEVNCETDFVARTDGFQALVKDIAMQIAAAAPQWVRRDEVPADVVAKELEIAKAQMRDQKKPEAILEKIAQGKLEKFYEQFCLLDQPFVKEDKKKMSEVLTDAVAKIGENIQVRRFARFVLGEGLEKKQENLAEEVAKAAGLQK.

Positions 82-85 are involved in Mg(2+) ion dislocation from EF-Tu; sequence TDFV.

It belongs to the EF-Ts family.

It localises to the cytoplasm. Associates with the EF-Tu.GDP complex and induces the exchange of GDP to GTP. It remains bound to the aminoacyl-tRNA.EF-Tu.GTP complex up to the GTP hydrolysis stage on the ribosome. The polypeptide is Elongation factor Ts (Anaeromyxobacter sp. (strain Fw109-5)).